Consider the following 201-residue polypeptide: Dephospho-CoA kinase (201 aa).

The region spanning 4–201 is the DPCK domain; sequence TIGLTGGIAS…ILKQWDALEK (198 aa). 12 to 17 contributes to the ATP binding site; the sequence is ASGKST.

This sequence belongs to the CoaE family.

The protein localises to the cytoplasm. The catalysed reaction is 3'-dephospho-CoA + ATP = ADP + CoA + H(+). It participates in cofactor biosynthesis; coenzyme A biosynthesis; CoA from (R)-pantothenate: step 5/5. Functionally, catalyzes the phosphorylation of the 3'-hydroxyl group of dephosphocoenzyme A to form coenzyme A. The protein is Dephospho-CoA kinase of Geobacillus kaustophilus (strain HTA426).